The primary structure comprises 344 residues: tRNA(Ile)-lysidine synthase (344 aa).

30 to 35 (SGGQDS) provides a ligand contact to ATP. The segment at 323-344 (PPPPAPVPPDPGERSPPPSPLY) is disordered.

It belongs to the tRNA(Ile)-lysidine synthase family.

The protein resides in the cytoplasm. It carries out the reaction cytidine(34) in tRNA(Ile2) + L-lysine + ATP = lysidine(34) in tRNA(Ile2) + AMP + diphosphate + H(+). Its function is as follows. Ligates lysine onto the cytidine present at position 34 of the AUA codon-specific tRNA(Ile) that contains the anticodon CAU, in an ATP-dependent manner. Cytidine is converted to lysidine, thus changing the amino acid specificity of the tRNA from methionine to isoleucine. In Thermosynechococcus vestitus (strain NIES-2133 / IAM M-273 / BP-1), this protein is tRNA(Ile)-lysidine synthase.